A 273-amino-acid polypeptide reads, in one-letter code: Homeobox protein Nkx-2.2 (273 aa).

Disordered stretches follow at residues 1–56 and 91–131; these read MSLT…LDAV and AASA…KRKR. Residues 20-38 show a composition bias toward acidic residues; the sequence is DTNDEDGSVAEGPEEESEG. A DNA-binding region (homeobox) is located at residues 128–187; sequence KRKRRVLFSKAQTYELERRFRQQRYLSAPEREHLASLIRLTPTQVKIWFQNHRYKMKRAR.

It belongs to the NK-2 homeobox family. Interacts with OLIG2. In terms of tissue distribution, expressed in restricted areas of the developing CNS: the hindbrain and forebrain, and pancreas.

It localises to the nucleus. Functionally, transcriptional activator involved in the development of insulin-producting beta cells in the endocrine pancreas. May also be involved in specifying diencephalic neuromeric boundaries, and in controlling the expression of genes that play a role in axonal guidance. Binds to elements within the NEUROD1 promoter. The sequence is that of Homeobox protein Nkx-2.2 (Nkx2-2) from Mus musculus (Mouse).